The following is a 414-amino-acid chain: Inositol-tetrakisphosphate 1-kinase (414 aa).

Residue Lys-18 coordinates 1D-myo-inositol 1,3,4-trisphosphate. ATP-binding residues include Arg-106 and Lys-157. The region spanning 117–325 (EAYMEDDRIC…IATVLQGQST (209 aa)) is the ATP-grasp domain. Residues His-167 and Lys-199 each contribute to the 1D-myo-inositol 1,3,4-trisphosphate site. Residues 188-199 (QNFINHNAVLYK), Ser-214, Ser-232, and Ser-236 contribute to the ATP site. The Mg(2+) site is built by Asp-281, Asp-295, and Asn-297. Asn-297 contributes to the 1D-myo-inositol 1,3,4-trisphosphate binding site. 2 positions are modified to N6-acetyllysine; by EP300 and CREBBP: Lys-340 and Lys-383. Phosphoserine is present on Ser-396. N6-acetyllysine; by EP300 and CREBBP is present on Lys-410.

It belongs to the ITPK1 family. In terms of assembly, monomer. Interacts with GPS1/COPS1. It depends on Mg(2+) as a cofactor. In terms of processing, acetylation by EP300 and CREBBP destabilizes ITPK1, and down-regulates enzymatic activity. Deacetylated by SIRT1. As to expression, expressed in brain &gt; heart &gt; skeletal muscle = kidney = pancreas = liver = placenta &gt; lung. In brain, it is expressed in cerebellum, cerebral cortex, medulla, spinal cord, occipital lobe, frontal lobe, temporal lobe and putamen.

The catalysed reaction is 1D-myo-inositol 3,4,5,6-tetrakisphosphate + ATP = 1D-myo-inositol 1,3,4,5,6-pentakisphosphate + ADP + H(+). It catalyses the reaction 1D-myo-inositol 1,3,4-trisphosphate + ATP = 1D-myo-inositol 1,3,4,5-tetrakisphosphate + ADP + H(+). It carries out the reaction 1D-myo-inositol 1,3,4-trisphosphate + ATP = 1D-myo-inositol 1,3,4,6-tetrakisphosphate + ADP + H(+). The enzyme catalyses 1D-myo-inositol 3,4,6-trisphosphate + ATP = 1D-myo-inositol 1,3,4,6-tetrakisphosphate + ADP + H(+). The catalysed reaction is 1D-myo-inositol 1,3,4-trisphosphate + 1D-myo-inositol 1,3,4,5,6-pentakisphosphate = 1D-myo-inositol 3,4,5,6-tetrakisphosphate + 1D-myo-inositol 1,3,4,6-tetrakisphosphate. It catalyses the reaction 1D-myo-inositol 1,3,4-trisphosphate + 1D-myo-inositol 1,3,4,5,6-pentakisphosphate = 1D-myo-inositol 3,4,5,6-tetrakisphosphate + 1D-myo-inositol 1,3,4,5-tetrakisphosphate. In terms of biological role, kinase that can phosphorylate various inositol polyphosphate such as Ins(3,4,5,6)P4 or Ins(1,3,4)P3. Phosphorylates Ins(3,4,5,6)P4 at position 1 to form Ins(1,3,4,5,6)P5. This reaction is thought to have regulatory importance, since Ins(3,4,5,6)P4 is an inhibitor of plasma membrane Ca(2+)-activated Cl(-) channels, while Ins(1,3,4,5,6)P5 is not. Also phosphorylates Ins(1,3,4)P3 on O-5 and O-6 to form Ins(1,3,4,6)P4, an essential molecule in the hexakisphosphate (InsP6) pathway. Also acts as an inositol polyphosphate phosphatase that dephosphorylates Ins(1,3,4,5)P4 and Ins(1,3,4,6)P4 to Ins(1,3,4)P3, and Ins(1,3,4,5,6)P5 to Ins(3,4,5,6)P4. May also act as an isomerase that interconverts the inositol tetrakisphosphate isomers Ins(1,3,4,5)P4 and Ins(1,3,4,6)P4 in the presence of ADP and magnesium. Probably acts as the rate-limiting enzyme of the InsP6 pathway. Modifies TNF-alpha-induced apoptosis by interfering with the activation of TNFRSF1A-associated death domain. Plays an important role in MLKL-mediated necroptosis. Produces highly phosphorylated inositol phosphates such as inositolhexakisphosphate (InsP6) which bind to MLKL mediating the release of an N-terminal auto-inhibitory region leading to its activation. Essential for activated phospho-MLKL to oligomerize and localize to the cell membrane during necroptosis. This is Inositol-tetrakisphosphate 1-kinase from Homo sapiens (Human).